A 593-amino-acid polypeptide reads, in one-letter code: Protein PSP2 (593 aa).

The segment covering 56–65 has biased composition (basic and acidic residues); the sequence is AGEHQRDGHQ. The interval 56 to 101 is disordered; it reads AGEHQRDGHQQHPHGGHGPMNRSRFSNAGPFGGGSMGDFANHHHPL. 2 positions are modified to phosphoserine: S150 and S238. Disordered stretches follow at residues 227 to 248 and 280 to 593; these read KPFI…KPVD and DSMA…DMPL. Polar residues-rich tracts occupy residues 231-241 and 280-290; these read TKTQRSKSNPF and DSMATTATGSK. Residue S340 is modified to Phosphoserine. Basic and acidic residues predominate over residues 347 to 402; sequence SKPDKSDEFKGGDEQGFEKGGDDKAQLDVSNDKDKGSETDVDKQFTFKNVEREHSM. Over residues 408–426 the composition is skewed to low complexity; the sequence is NGNHNNNNGNFRGSNRYRG. Omega-N-methylarginine occurs at positions 419, 425, and 440. A Dimethylated arginine modification is found at R443. R447 bears the Omega-N-methylarginine mark. Positions 449–477 are enriched in low complexity; it reads GSSYNNNNNNTNDNNNNNNNSSSNNNNGS. Composition is skewed to polar residues over residues 486-497 and 505-516; these read EEGLTSDSSLDA and FTNSTSNTQQYS. S522 carries the phosphoserine modification. Positions 534–545 are enriched in low complexity; it reads RNNGRGNYNSSG. R538, R551, and R575 each carry omega-N-methylarginine. Gly residues predominate over residues 546–563; the sequence is MNGGSRGRGFGRGRGFGR. A compositionally biased stretch (low complexity) spans 578–587; the sequence is SGNYSNYNNR.

The protein localises to the cytoplasm. The protein resides in the P-body. It localises to the stress granule. Its function is as follows. DNA polymerase alpha mutation suppressor. Suppressor of group II intron splicing defects of a mutation in MRS2. May play a role in mitochondrial mRNA splicing. The protein is Protein PSP2 of Saccharomyces cerevisiae (strain ATCC 204508 / S288c) (Baker's yeast).